The chain runs to 82 residues: UPF0437 protein in nifX-nifW intergenic region (82 aa).

The protein belongs to the UPF0437 family.

The chain is UPF0437 protein in nifX-nifW intergenic region from Frankia alni.